The sequence spans 199 residues: Extracellular superoxide dismutase [Cu-Zn] (199 aa).

A signal peptide spans 1 to 20; that stretch reads MMIASFAIFLSHIIFITYAT. 3 N-linked (GlcNAc...) asparagine glycosylation sites follow: Asn-33, Asn-60, and Asn-70. The Cu cation site is built by His-89, His-91, and His-106. An intrachain disulfide couples Cys-100 to Cys-192. His-106 contacts Zn(2+). The N-linked (GlcNAc...) asparagine glycan is linked to Asn-111. The Zn(2+) site is built by His-114, His-123, and Asp-126. His-163 contacts Cu cation.

Belongs to the Cu-Zn superoxide dismutase family. As to quaternary structure, homodimer. Requires Cu cation as cofactor. Zn(2+) serves as cofactor.

Its subcellular location is the secreted. It is found in the extracellular space. The catalysed reaction is 2 superoxide + 2 H(+) = H2O2 + O2. Functionally, protect the extracellular space from toxic effect of reactive oxygen intermediates by converting superoxide radicals into hydrogen peroxide and oxygen. May act in the parasite defense by neutralizing superoxide generated by activated leukocytes, thus acting as both an antioxidant and an anti-inflammatory factor. This chain is Extracellular superoxide dismutase [Cu-Zn], found in Brugia pahangi (Filarial nematode worm).